The primary structure comprises 476 residues: Homeobox protein invected (476 aa).

3 disordered regions span residues 1-43 (MAAV…SEDI), 273-331 (KTRY…TSGD), and 347-381 (DRPSSGRSPRTRRPKKPPGDTASNDEKRPRTAFSG). Residues 23–32 (SPNTRDTTSP) are compositionally biased toward polar residues. Basic and acidic residues-rich tracts occupy residues 33-43 (ECHDDEKSEDI) and 292-305 (KLDEARVPDIKTPD). The segment covering 318 to 331 (GSNSGSTSGATSGD) has biased composition (low complexity). The segment at residues 372-431 (EKRPRTAFSGPQLARLKHEFAENRYLTERRRQSLAAELGLAEAQIKIWFQNKRAKIKKAS) is a DNA-binding region (homeobox).

It belongs to the engrailed homeobox family. In terms of tissue distribution, expressed in the middle silk gland but not in the posterior silk gland during the fourth molt/fifth intermolt period.

Its subcellular location is the nucleus. Functionally, this protein might be involved in the compartmentalization of the silk gland. In Bombyx mori (Silk moth), this protein is Homeobox protein invected (INV).